A 168-amino-acid chain; its full sequence is Peptide deformylase 1 (168 aa).

Residues cysteine 91 and histidine 133 each coordinate Fe cation. Residue glutamate 134 is part of the active site. Residue histidine 137 participates in Fe cation binding.

The protein belongs to the polypeptide deformylase family. Fe(2+) is required as a cofactor.

The enzyme catalyses N-terminal N-formyl-L-methionyl-[peptide] + H2O = N-terminal L-methionyl-[peptide] + formate. Removes the formyl group from the N-terminal Met of newly synthesized proteins. Requires at least a dipeptide for an efficient rate of reaction. N-terminal L-methionine is a prerequisite for activity but the enzyme has broad specificity at other positions. In Vibrio vulnificus (strain YJ016), this protein is Peptide deformylase 1.